A 367-amino-acid chain; its full sequence is UDP-N-acetylglucosamine--N-acetylmuramyl-(pentapeptide) pyrophosphoryl-undecaprenol N-acetylglucosamine transferase (367 aa).

UDP-N-acetyl-alpha-D-glucosamine-binding positions include 15 to 17 (TGG), Asn127, Arg163, Ser191, Ile249, and Gln294.

Belongs to the glycosyltransferase 28 family. MurG subfamily.

The protein localises to the cell inner membrane. The catalysed reaction is di-trans,octa-cis-undecaprenyl diphospho-N-acetyl-alpha-D-muramoyl-L-alanyl-D-glutamyl-meso-2,6-diaminopimeloyl-D-alanyl-D-alanine + UDP-N-acetyl-alpha-D-glucosamine = di-trans,octa-cis-undecaprenyl diphospho-[N-acetyl-alpha-D-glucosaminyl-(1-&gt;4)]-N-acetyl-alpha-D-muramoyl-L-alanyl-D-glutamyl-meso-2,6-diaminopimeloyl-D-alanyl-D-alanine + UDP + H(+). It participates in cell wall biogenesis; peptidoglycan biosynthesis. Functionally, cell wall formation. Catalyzes the transfer of a GlcNAc subunit on undecaprenyl-pyrophosphoryl-MurNAc-pentapeptide (lipid intermediate I) to form undecaprenyl-pyrophosphoryl-MurNAc-(pentapeptide)GlcNAc (lipid intermediate II). The chain is UDP-N-acetylglucosamine--N-acetylmuramyl-(pentapeptide) pyrophosphoryl-undecaprenol N-acetylglucosamine transferase from Burkholderia pseudomallei (strain 1106a).